A 193-amino-acid chain; its full sequence is Cysteine and glycine-rich protein 1 (193 aa).

In terms of domain architecture, LIM zinc-binding 1 spans 10-61 (CGVCQKTVYFAEEVQCEGNSFHKSCFLCMVCKKNLDSTTVAVHGEEIYCKSC). The Nuclear localization signal signature appears at 64–69 (KKYGPK). Serine 81 is subject to Phosphoserine. At lysine 84 the chain carries N6-acetyllysine. Lysine 91 is covalently cross-linked (Glycyl lysine isopeptide (Lys-Gly) (interchain with G-Cter in SUMO2)). N6-acetyllysine is present on residues lysine 112, lysine 131, lysine 137, and lysine 161. Residues 119–170 (CPRCSQAVYAAEKVIGAGKSWHKACFRCAKCGKGLESTTLADKDGEIYCKGC) form the LIM zinc-binding 2 domain. Phosphoserine is present on serine 192.

As to quaternary structure, interacts with ASCC1; ASCC2 and TRIP4.

It is found in the nucleus. Could play a role in neuronal development. The polypeptide is Cysteine and glycine-rich protein 1 (CSRP1) (Pongo abelii (Sumatran orangutan)).